A 295-amino-acid polypeptide reads, in one-letter code: Protease HtpX (295 aa).

The next 2 helical transmembrane spans lie at 4 to 24 and 41 to 61; these read ILLF…TLSL and SSLL…SLFI. His-147 provides a ligand contact to Zn(2+). Glu-148 is an active-site residue. A Zn(2+)-binding site is contributed by His-151. 2 consecutive transmembrane segments (helical) span residues 158–178 and 199–219; these read VTLA…ARII and VATI…VMWF. Residue Glu-224 participates in Zn(2+) binding.

Belongs to the peptidase M48B family. Zn(2+) serves as cofactor.

Its subcellular location is the cell inner membrane. This chain is Protease HtpX, found in Pseudomonas putida (strain GB-1).